The chain runs to 208 residues: MTNVQRSRRQVRLSRALGIALTPKAQRIFEKRPYAPGEHGRTRRRTESDYAVRLREKQRLRAQYGISEKQLRAAYEKGTHTAGQTGNAMLTDLETRLDALVLRAGFARTTAQARQFVVHRHILVDGNIVDRPSYRVKPGQTIQVKAKSQTMVPFQAAAEGVHRDVLPAVPGYLDVNLPSLKATLTRKPEAEEIPVQVNIQYVVEFYAR.

The S4 RNA-binding domain maps to 95-155; it reads TRLDALVLRA…AKSQTMVPFQ (61 aa).

It belongs to the universal ribosomal protein uS4 family. As to quaternary structure, part of the 30S ribosomal subunit. Contacts protein S5. The interaction surface between S4 and S5 is involved in control of translational fidelity.

One of the primary rRNA binding proteins, it binds directly to 16S rRNA where it nucleates assembly of the body of the 30S subunit. In terms of biological role, with S5 and S12 plays an important role in translational accuracy. The protein is Small ribosomal subunit protein uS4 of Bifidobacterium adolescentis (strain ATCC 15703 / DSM 20083 / NCTC 11814 / E194a).